The chain runs to 69 residues: Antimicrobial peptide Meucin-18 (69 aa).

The N-terminal stretch at 1–16 (MVIFLAYFLVVNESEA) is a signal peptide. The propeptide occupies 38 to 69 (ERSVMNRDLENLFDPYQRNLEMDRLLKQLRNY).

It belongs to the non-disulfide-bridged peptide (NDBP) superfamily. Medium-length antimicrobial peptide (group 3) family. Expressed by the venom gland.

Its subcellular location is the secreted. The protein localises to the target cell membrane. Its function is as follows. Amphipathic peptide that exhibits extensive cytolytic activities against both prokaryotic and eukaryotic cells. Acts by fastly disrupting the bacterial membrane. Is more potent against Gram-positive bacteria than against Gram-negative bacteria, and fungi (LC=25.1-8.3 uM). Shows potent activity against penicillin (MIC=3.0 uM) and methicillin (MIC=1.5-3.0 uM) resistant bacteria. Is lethal to the fungus Beauveria sp (LC=1.9 uM), a highly lethal pathogenic fungus to insects and resistant to many AMPs. Shows hemolytic activity against rabbit erythrocytes (37.7% of inhibition at 6.25 uM) and cytolysis against rat dorsal root ganglions. May act by disrupting the integrity of the bacterial cell membrane. Antibiotic activity is not affected by major negatively charged components of the prokaryotic cell wall (e.g. lipopolysaccharides and lipoteichoic acid). In vivo, intravenous injection into mice tail provokes uncomfortable symptoms with a death rate of 12.5%. In vivo, in a mouse model of lethal peritonitis, shows potent antibiotic activity without cytotoxicity, improving the survival rate. The polypeptide is Antimicrobial peptide Meucin-18 (Mesobuthus eupeus (Lesser Asian scorpion)).